The chain runs to 101 residues: DNA-binding protein Fis (101 aa).

The segment at residues 77–96 is a DNA-binding region (H-T-H motif); sequence QTRAANMLGINRGTLRKKLK.

The protein belongs to the transcriptional regulatory Fis family. As to quaternary structure, homodimer.

Its function is as follows. Activates ribosomal RNA transcription. Plays a direct role in upstream activation of rRNA promoters. This chain is DNA-binding protein Fis, found in Shewanella halifaxensis (strain HAW-EB4).